We begin with the raw amino-acid sequence, 64 residues long: Ferredoxin-like protein in nif region (64 aa).

A 4Fe-4S ferredoxin-type domain is found at 2-30 (AFKIIASQCTQCGACEFECPSGAISFKTD). Positions 10, 13, 16, 20, 39, 42, 51, and 55 each coordinate [4Fe-4S] cluster.

The cofactor is [4Fe-4S] cluster.

The polypeptide is Ferredoxin-like protein in nif region (fdxN) (Rhizobium leguminosarum bv. trifolii).